The sequence spans 206 residues: Superoxide dismutase [Mn] (206 aa).

The Mn(2+) site is built by His27, His82, Asp168, and His172.

It belongs to the iron/manganese superoxide dismutase family. Mn(2+) is required as a cofactor.

The enzyme catalyses 2 superoxide + 2 H(+) = H2O2 + O2. In terms of biological role, destroys superoxide anion radicals which are normally produced within the cells and which are toxic to biological systems. This is Superoxide dismutase [Mn] (sodA) from Lactococcus lactis subsp. lactis (strain IL1403) (Streptococcus lactis).